Here is a 402-residue protein sequence, read N- to C-terminus: MEQKPSTLDPLSEPEDTRWLDGKRKRKSSQCLVKSSMSGYIPSYLDKDEQCVVCGDKATGYHYRCITCAGCKGFFRRTIQKNLHPTYSCKYDGCCVIDKITRNQCQLCRFKKCISVGMAMDLVLYDSKRVAKRKLIEENRERRRKEEMIKSLQHRPNPSAEEWELIHVVTEAHRSTNAQGSHWKQKRKFLPEDIGQSPMASMPDGDKVDLEAFSEFTKIITPAITRVVDFAKKLPMFSELPCEDQIILLKGCCMEIMSLRAAVRYDPEGGTLTLSGEMAVKREQLKNGGLRVVSDAIFDLGKSLSAFNLDDTEVALLQAVLLMSSDRTGLICVEKIEKCQETYLLAFEHYINYRKHNIPHFWPKLLMKVTDLRMIRACHASRFLHMKVECPTELFPPLFLEV.

The disordered stretch occupies residues 1-22 (MEQKPSTLDPLSEPEDTRWLDG). Residues 1-50 (MEQKPSTLDPLSEPEDTRWLDGKRKRKSSQCLVKSSMSGYIPSYLDKDEQ) form a modulating region. Serine 12 carries the post-translational modification Phosphoserine; by CK2. Serine 28 is subject to Phosphoserine. Residues cysteine 51, cysteine 54, cysteine 68, cysteine 71, cysteine 89, cysteine 95, cysteine 105, and cysteine 108 each coordinate Zn(2+). 2 consecutive NR C4-type zinc fingers follow at residues 51 to 71 (CVVC…CAGC) and 89 to 113 (CKYD…FKKC). A DNA-binding region (nuclear receptor) is located at residues 51–125 (CVVCGDKATG…VGMAMDLVLY (75 aa)). In terms of domain architecture, NR LBD spans 161–402 (EEWELIHVVT…ELFPPLFLEV (242 aa)). Positions 226 and 275 each coordinate 3,3',5-triiodo-L-thyronine.

This sequence belongs to the nuclear hormone receptor family. NR1 subfamily. Probably interacts with SFPQ.

The protein resides in the nucleus. Functionally, nuclear hormone receptor that can act as a repressor or activator of transcription. High affinity receptor for thyroid hormones, including triiodothyronine and thyroxine. This Pygoscelis adeliae (Adelie penguin) protein is Thyroid hormone receptor alpha (THRA).